The following is a 151-amino-acid chain: Methylglyoxal synthase (151 aa).

The MGS-like domain maps to 1 to 151; it reads MKKTTRTMAA…DYQAYLAERT (151 aa). Residues His19, Lys23, 45–48, and 65–66 each bind substrate; these read TGTT and SG. Asp71 serves as the catalytic Proton donor/acceptor. His98 provides a ligand contact to substrate.

This sequence belongs to the methylglyoxal synthase family.

It carries out the reaction dihydroxyacetone phosphate = methylglyoxal + phosphate. Functionally, catalyzes the formation of methylglyoxal from dihydroxyacetone phosphate. This is Methylglyoxal synthase from Vibrio cholerae serotype O1 (strain ATCC 39541 / Classical Ogawa 395 / O395).